Consider the following 1259-residue polypeptide: Trafficking protein particle complex subunit 10 (1259 aa).

Ser-708 carries the phosphoserine modification. The disordered stretch occupies residues 1189–1222 (LSVDKHGDDQPDSSSLKSRGSVHSACSSEHKGLP).

This sequence belongs to the TRAPPC10 family. Specific component of the multisubunit TRAPP II complex, which includes at least TRAPPC1, TRAPPC2, TRAPPC3, TRAPPC4, TRAPPC5, TRAPPC6A/B, TRAPPC9, TRAPPC10 and TRAPPC14. TRAPPC9, TRAPPC10 and TRAPPC14 are specific subunits of the TRAPP II complex. Interacts with TRAPPC14. As to expression, expressed in all tissues examined.

It localises to the golgi apparatus. Its subcellular location is the cis-Golgi network. Functionally, specific subunit of the TRAPP (transport protein particle) II complex, a highly conserved vesicle tethering complex that functions in late Golgi trafficking as a membrane tether. The polypeptide is Trafficking protein particle complex subunit 10 (TRAPPC10) (Homo sapiens (Human)).